Consider the following 465-residue polypeptide: WASH complex subunit 1 (465 aa).

Residues 1–54 (MTPVRMQHSLAGQTYAVPFIQPDLRREEAVQQMADALQYLQKVSGDIFSRISQQ) form a required for WASH complex assembly region. The WHD1 stretch occupies residues 1–167 (MTPVRMQHSL…EGLGGLPSNI (167 aa)). A Glycyl lysine isopeptide (Lys-Gly) (interchain with G-Cter in ubiquitin) cross-link involves residue Lys-220. Disordered stretches follow at residues 297-359 (QDGV…VDPS), 376-407 (GKAK…QGGH), and 423-465 (ISGK…DWES). A compositionally biased stretch (pro residues) spans 302–314 (TPPPPPPPPPPAP). Residues 349-465 (QGAPREVVDP…AEEDEDDWES (117 aa)) form a VCA region. One can recognise a WH2 domain in the interval 361-383 (GWATLLESIRQAGGIGKAKLRSM). Basic and acidic residues predominate over residues 382 to 398 (SMKERKLEKQQQKEQEQ). Positions 424 to 436 (SGKGPGAGEGPGG) are enriched in gly residues. Positions 456–465 (AEEDEDDWES) are enriched in acidic residues.

This sequence belongs to the WASH1 family. Component of the WASH core complex also described as WASH regulatory complex (SHRC) composed of WASH (WASHC1, WASH2P or WASH3P), WASHC2 (WASHC2A or WASHC2C), WASHC3, WASHC4 and WASHC5. The WASH core complex associates via WASHC2 with the F-actin-capping protein dimer (formed by CAPZA1, CAPZA2 or CAPZA3 and CAPZB) in a transient or substoichiometric manner which was initially described as WASH complex. Interacts (via WHD1 region) with WASHC2C; the interaction is direct. Interacts with VPS35; mediates the association with the retromer CSC complex. Interacts with FKBP15. Interacts with alpha-tubulin. Interacts with BECN1; this interaction can be competed out by AMBRA1 binding. Interacts with BLOC1S2; may associate with the BLOC-1 complex. Interacts with tubulin gamma chain (TUBG1 or TUBG2). Interacts with EXOC1, EXOC4, EXOC8; in MMP14-positive endosomes in breast tumor cells; indicative for an association with the exocyst complex. Interacts with TBC1D23. Ubiquitinated at Lys-220 via 'Lys-63'-linked ubiquitin chains by the TRIM27:MAGEL2 E3 ubiquitin ligase complex, leading to promote endosomal F-actin assembly.

Its subcellular location is the early endosome membrane. It localises to the recycling endosome membrane. The protein resides in the late endosome. The protein localises to the cytoplasmic vesicle. It is found in the autophagosome. Its subcellular location is the cytoplasm. It localises to the cytoskeleton. The protein resides in the microtubule organizing center. The protein localises to the centrosome. It is found in the centriole. Functionally, acts as a component of the WASH core complex that functions as a nucleation-promoting factor (NPF) at the surface of endosomes, where it recruits and activates the Arp2/3 complex to induce actin polymerization, playing a key role in the fission of tubules that serve as transport intermediates during endosome sorting. Involved in endocytic trafficking of EGF. Involved in transferrin receptor recycling. Regulates the trafficking of endosomal alpha5beta1 integrin to the plasma membrane and involved in invasive cell migration. In T-cells involved in endosome-to-membrane recycling of receptors including T-cell receptor (TCR), CD28 and ITGAL; proposed to be implicated in T cell proliferation and effector function. In dendritic cells involved in endosome-to-membrane recycling of major histocompatibility complex (MHC) class II probably involving retromer and subsequently allowing antigen sampling, loading and presentation during T-cell activation. Involved in Arp2/3 complex-dependent actin assembly driving Salmonella typhimurium invasion independent of ruffling. Involved in the exocytosis of MMP14 leading to matrix remodeling during invasive migration and implicating late endosome-to-plasma membrane tubular connections and cooperation with the exocyst complex. Involved in negative regulation of autophagy independently from its role in endosomal sorting by inhibiting BECN1 ubiquitination to inactivate PIK3C3/Vps34 activity. This is WASH complex subunit 1 from Homo sapiens (Human).